The following is a 557-amino-acid chain: Ribonuclease J 2 (557 aa).

Zn(2+) contacts are provided by histidine 76, histidine 78, histidine 144, and glutamate 166. 366–370 contributes to the substrate binding site; the sequence is HASSH.

This sequence belongs to the metallo-beta-lactamase superfamily. RNA-metabolizing metallo-beta-lactamase-like family. Bacterial RNase J subfamily. Homodimer, may be a subunit of the RNA degradosome. It depends on Zn(2+) as a cofactor.

The protein resides in the cytoplasm. In terms of biological role, an RNase that has 5'-3' exonuclease and possibly endoonuclease activity. Involved in maturation of rRNA and in some organisms also mRNA maturation and/or decay. The polypeptide is Ribonuclease J 2 (Staphylococcus aureus (strain MRSA252)).